Consider the following 406-residue polypeptide: MSVLSGLASEPRTPLSSKARMKRLPKKNQNEKYRLKYLRLRRAAKATVFENAAVCDEIARLEEKFLKAKEERRYLLKKLLQIHALTEGEPQAAAPSHSSSLPLAYGVTSSVGTIQGAGPSTGAEEPFAKKSKKEKKEKGKENSKLEVLKKTSKRKKMEGGARKLVRPIALDPSGQPVFPIGLGGLTVYSLGEIITNRPGFHDENAIYPVGYCSTRVYASMKCPDQKCLYTCQIKDGGVQPQFEIVPEDDPRNTIVGSSADACYEELLRAISAATGKLMPNPLSCGADFFGFSHPTIHNLIQSCPEAQNCVNYQWVKFDACKPRKGQLSQELPENDAAMSLEAFPTQTFDDDHEDSILPGSLDLPELQHEAFVSSYQPEFLTHEPLVDTDLQHLKSPSQCSPIQSSD.

Disordered stretches follow at residues 1 to 26 (MSVL…RLPK) and 116 to 144 (GAGP…ENSK). Ser2 is subject to N-acetylserine. Thr13 carries the post-translational modification Phosphothreonine. Residues 134–144 (EKKEKGKENSK) are compositionally biased toward basic and acidic residues. The region spanning 177-236 (VFPIGLGGLTVYSLGEIITNRPGFHDENAIYPVGYCSTRVYASMKCPDQKCLYTCQIKDG) is the FYR N-terminal domain. In terms of domain architecture, FYR C-terminal spans 237-316 (GVQPQFEIVP…QNCVNYQWVK (80 aa)).

Belongs to the TBRG1 family. In terms of assembly, interacts with CDKN2A and MDM2. Ubiquitinated; mediated by MDM2 and leading to its subsequent proteasomal degradation.

The protein resides in the nucleus. Its function is as follows. Acts as a growth inhibitor. Can activate p53/TP53, causes G1 arrest and collaborates with CDKN2A to restrict proliferation, but does not require either protein to inhibit DNA synthesis. Redistributes CDKN2A into the nucleoplasm. Involved in maintaining chromosomal stability. This chain is Transforming growth factor beta regulator 1 (Tbrg1), found in Rattus norvegicus (Rat).